Consider the following 328-residue polypeptide: Homoarginine-6-hydroxylase 2-ODD-233 (328 aa).

Residues 183–288 (FWVCRLIGYP…VSVAFFYESN (106 aa)) form the Fe2OG dioxygenase domain. Fe cation-binding residues include histidine 210, aspartate 212, and histidine 268. A 2-oxoglutarate-binding site is contributed by arginine 278.

Belongs to the iron/ascorbate-dependent oxidoreductase family. It depends on Fe(2+) as a cofactor. The cofactor is L-ascorbate. In terms of tissue distribution, expressed in roots and shoots.

The protein localises to the cytoplasm. It catalyses the reaction L-homoarginine + 2-oxoglutarate + O2 = 6-hydroxy-L-homoarginine + succinate + CO2. The catalysed reaction is melatonin + 2-oxoglutarate + O2 = 2-hydroxymelatonin + succinate + CO2. 2-oxoglutarate-dependent dioxygenase catalyzing homoarginine 6-hydroxylation thus producing 6-hydroxy-L-homoarginine. Guanidine (Gd) is in turn synthesized by the spontaneous conversion of 6-hydroxy-L-homoarginine to (S)-2-amino-6-oxohexanoate (RHEA:79843); guanidine is a nitrogen-rich compound that can serve as a defense or signaling substance. Involved in melatonin degradation. Catalyzes the hydroxylation of melatonin to produce 2-hydroxymelatonin. The polypeptide is Homoarginine-6-hydroxylase 2-ODD-233 (Oryza sativa subsp. japonica (Rice)).